Here is an 837-residue protein sequence, read N- to C-terminus: Histone acetyltransferase KAT2A (837 aa).

A disordered region spans residues 1–99; sequence MAEPSQAPTP…RKAQVRGLPR (99 aa). N-acetylalanine is present on alanine 2. A compositionally biased stretch (pro residues) spans 7 to 51; that stretch reads APTPAPAAQPRPLQSPAPAPTPTPAPSPASAPIPTPTPAPAPAPA. The span at 58–74 shows a compositional bias: gly residues; that stretch reads TGTGGPGVGSGGAGSGG. A compositionally biased stretch (low complexity) spans 75-87; the sequence is DPARPGLSQQQRA. Residues 88–99 are compositionally biased toward basic residues; it reads SQRKAQVRGLPR. Residue serine 307 is modified to Phosphoserine. Residues 407 to 434 form a disordered region; it reads FSPSMGGGSNSSLSLDSAGAEPMPGEKR. Low complexity predominate over residues 416 to 425; sequence NSSLSLDSAG. The N-acetyltransferase domain maps to 503–656; sequence VIGNSLTPKA…GATLMECELN (154 aa). Lysine 549 carries the post-translational modification N6-acetyllysine. Residue glutamate 575 is the Proton donor/acceptor of the active site. Residues 579–581, 586–592, and tyrosine 617 each bind acetyl-CoA; these read CAV and QVKGYGT. Succinyl-CoA contacts are provided by residues 579–581, 586–592, and tyrosine 617; these read CAV and QVKGYGT. The tract at residues 639–648 is loop 3; the sequence is LGYIKDYEGA. A Glycyl lysine isopeptide (Lys-Gly) (interchain with G-Cter in SUMO2) cross-link involves residue lysine 728. Positions 728-832 constitute a Bromo domain; it reads KDPDQLYTTL…KFFYFKLKEG (105 aa). Threonine 735 carries the phosphothreonine modification. Residues lysine 759 and lysine 791 each participate in a glycyl lysine isopeptide (Lys-Gly) (interchain with G-Cter in SUMO2) cross-link.

It belongs to the acetyltransferase family. GCN5 subfamily. In terms of assembly, homooligomer; may form a tetramer of homodimers. Interacts with EP300, CREBBP and ADA2. Component of the TFTC-HAT complex, at least composed of TAF5L, TAF6L, TAF3, TADA3L, SUPT3H/SPT3, TAF2/TAFII150, TAF4/TAFII135, TAF5/TAFII100, KAT2A/GCN5L2, TAF10 and TRRAP. Component of the STAGA transcription coactivator-HAT complex, at least composed of SUPT3H, KAT2A, SUPT7L, TAF5L, TAF6L, TADA3L, TAD1L, TAF10, TAF12, TRRAP and TAF9. The STAGA core complex is associated with a subcomplex required for histone deubiquitination composed of ATXN7L3, ENY2 and USP22. Component of the ADA2A-containing complex (ATAC), composed of KAT14, KAT2A, TADA2L, TADA3L, ZZ3, MBIP, WDR5, YEATS2, CCDC101 and DR1. In the complex, it probably interacts directly with KAT14, MBIP and WDR5. Interacts with PML. Interacts with CEBPB. Interacts with TACC1, TACC2 and TACC3. Interacts with RELA. Interacts with NFATC2. Interacts with TBX5. Interacts with PLK4. Associates with the 2-oxoglutarate dehydrogenase complex. Interacts with XPC; leading to KAT2A recruitment to promoters and subsequent acetylation of histones. Interacts with ERCC3/XPB; leading to KAT2A recruitment to promoters and subsequent acetylation of histones. Interacts with ISL1. Interactions of ISL1 with MLIP1 or KAT2A may be mutually exclusive. (Microbial infection) Interacts with and acetylates HIV-1 Tat. Acetylated at Lys-549, inhibiting the protein acetyltransferase activity. Deacetylation at Lys-549 by SIRT6 promotes phosphorylation at Ser-307 and Thr-735 and subsequent activation of the protein acetyltransferase activity, leading to acetylation and inactivation of PPARGC1A. In terms of tissue distribution, expressed in all tissues tested.

Its subcellular location is the nucleus. The protein resides in the chromosome. It is found in the cytoplasm. The protein localises to the cytoskeleton. It localises to the microtubule organizing center. Its subcellular location is the centrosome. It catalyses the reaction L-lysyl-[histone] + acetyl-CoA = N(6)-acetyl-L-lysyl-[histone] + CoA + H(+). The catalysed reaction is L-lysyl-[protein] + acetyl-CoA = N(6)-acetyl-L-lysyl-[protein] + CoA + H(+). It carries out the reaction succinyl-CoA + L-lysyl-[protein] = N(6)-succinyl-L-lysyl-[protein] + CoA + H(+). The enzyme catalyses glutaryl-CoA + L-lysyl-[protein] = N(6)-glutaryl-L-lysyl-[protein] + CoA + H(+). In terms of biological role, protein lysine acyltransferase that can act as a acetyltransferase, glutaryltransferase, succinyltransferase or malonyltransferase, depending on the context. Acts as a histone lysine succinyltransferase: catalyzes succinylation of histone H3 on 'Lys-79' (H3K79succ), with a maximum frequency around the transcription start sites of genes. Succinylation of histones gives a specific tag for epigenetic transcription activation. Association with the 2-oxoglutarate dehydrogenase complex, which provides succinyl-CoA, is required for histone succinylation. In different complexes, functions either as an acetyltransferase (HAT) or as a succinyltransferase: in the SAGA and ATAC complexes, acts as a histone acetyltransferase. Has significant histone acetyltransferase activity with core histones, but not with nucleosome core particles. Has a a strong preference for acetylation of H3 at 'Lys-9' (H3K9ac). Acetylation of histones gives a specific tag for epigenetic transcription activation. Recruited by the XPC complex at promoters, where it specifically mediates acetylation of histone variant H2A.Z.1/H2A.Z, thereby promoting expression of target genes. Involved in long-term memory consolidation and synaptic plasticity: acts by promoting expression of a hippocampal gene expression network linked to neuroactive receptor signaling. Acts as a positive regulator of T-cell activation: upon TCR stimulation, recruited to the IL2 promoter following interaction with NFATC2 and catalyzes acetylation of histone H3 at 'Lys-9' (H3K9ac), leading to promote IL2 expression. Required for growth and differentiation of craniofacial cartilage and bone by regulating acetylation of histone H3 at 'Lys-9' (H3K9ac). Regulates embryonic stem cell (ESC) pluripotency and differentiation. Also acetylates non-histone proteins, such as CEBPB, MRE11, PPARGC1A, PLK4 and TBX5. Involved in heart and limb development by mediating acetylation of TBX5, acetylation regulating nucleocytoplasmic shuttling of TBX5. Acts as a negative regulator of centrosome amplification by mediating acetylation of PLK4. Acts as a negative regulator of gluconeogenesis by mediating acetylation and subsequent inactivation of PPARGC1A. Also acts as a histone glutaryltransferase: catalyzes glutarylation of histone H4 on 'Lys-91' (H4K91glu), a mark that destabilizes nucleosomes by promoting dissociation of the H2A-H2B dimers from nucleosomes. Functionally, (Microbial infection) In case of HIV-1 infection, it is recruited by the viral protein Tat. Regulates Tat's transactivating activity and may help inducing chromatin remodeling of proviral genes. This is Histone acetyltransferase KAT2A from Homo sapiens (Human).